Here is a 98-residue protein sequence, read N- to C-terminus: NADH-ubiquinone oxidoreductase chain 4L (98 aa).

3 consecutive transmembrane segments (helical) span residues 1 to 21 (MSIT…GLLL), 29 to 49 (SLLC…MIIL), and 61 to 81 (IILL…LVMV).

It belongs to the complex I subunit 4L family. In terms of assembly, core subunit of respiratory chain NADH dehydrogenase (Complex I) which is composed of 45 different subunits.

It is found in the mitochondrion inner membrane. It catalyses the reaction a ubiquinone + NADH + 5 H(+)(in) = a ubiquinol + NAD(+) + 4 H(+)(out). In terms of biological role, core subunit of the mitochondrial membrane respiratory chain NADH dehydrogenase (Complex I) which catalyzes electron transfer from NADH through the respiratory chain, using ubiquinone as an electron acceptor. Part of the enzyme membrane arm which is embedded in the lipid bilayer and involved in proton translocation. The sequence is that of NADH-ubiquinone oxidoreductase chain 4L (MT-ND4L) from Platyrrhinus dorsalis (Thomas's broad-nosed bat).